The primary structure comprises 254 residues: NH(3)-dependent NAD(+) synthetase (254 aa).

An ATP-binding site is contributed by 32–39 (GISGGVDS). Aspartate 38 lines the Mg(2+) pocket. Arginine 113 lines the deamido-NAD(+) pocket. Threonine 133 provides a ligand contact to ATP. Glutamate 138 provides a ligand contact to Mg(2+). Deamido-NAD(+) contacts are provided by lysine 146 and aspartate 153. Residues lysine 162 and serine 184 each contribute to the ATP site. Position 244-245 (244-245 (HK)) interacts with deamido-NAD(+).

Belongs to the NAD synthetase family. Homodimer.

The catalysed reaction is deamido-NAD(+) + NH4(+) + ATP = AMP + diphosphate + NAD(+) + H(+). It functions in the pathway cofactor biosynthesis; NAD(+) biosynthesis; NAD(+) from deamido-NAD(+) (ammonia route): step 1/1. Functionally, catalyzes the ATP-dependent amidation of deamido-NAD to form NAD. Uses ammonia as a nitrogen source. The chain is NH(3)-dependent NAD(+) synthetase from Thermococcus sibiricus (strain DSM 12597 / MM 739).